A 607-amino-acid polypeptide reads, in one-letter code: Elongation factor 4 (607 aa).

Residues 6-188 enclose the tr-type G domain; that stretch reads DRIRNFSIIA…AIVARIPAPK (183 aa). GTP contacts are provided by residues 18-23 and 135-138; these read DHGKST and NKID.

Belongs to the TRAFAC class translation factor GTPase superfamily. Classic translation factor GTPase family. LepA subfamily.

Its subcellular location is the cell inner membrane. The catalysed reaction is GTP + H2O = GDP + phosphate + H(+). Functionally, required for accurate and efficient protein synthesis under certain stress conditions. May act as a fidelity factor of the translation reaction, by catalyzing a one-codon backward translocation of tRNAs on improperly translocated ribosomes. Back-translocation proceeds from a post-translocation (POST) complex to a pre-translocation (PRE) complex, thus giving elongation factor G a second chance to translocate the tRNAs correctly. Binds to ribosomes in a GTP-dependent manner. The sequence is that of Elongation factor 4 from Rhizorhabdus wittichii (strain DSM 6014 / CCUG 31198 / JCM 15750 / NBRC 105917 / EY 4224 / RW1) (Sphingomonas wittichii).